Consider the following 205-residue polypeptide: Small ribosomal subunit protein uS4 (205 aa).

The tract at residues 19-45 (IWGRSKSPVNRREYGPGQHGQRRKGKL) is disordered. The S4 RNA-binding domain occupies 94 to 157 (RRLDAVVYRA…KQMALVLEAV (64 aa)).

This sequence belongs to the universal ribosomal protein uS4 family. In terms of assembly, part of the 30S ribosomal subunit. Contacts protein S5. The interaction surface between S4 and S5 is involved in control of translational fidelity.

One of the primary rRNA binding proteins, it binds directly to 16S rRNA where it nucleates assembly of the body of the 30S subunit. In terms of biological role, with S5 and S12 plays an important role in translational accuracy. This is Small ribosomal subunit protein uS4 from Azorhizobium caulinodans (strain ATCC 43989 / DSM 5975 / JCM 20966 / LMG 6465 / NBRC 14845 / NCIMB 13405 / ORS 571).